The chain runs to 643 residues: MLENYGNVASLGFPLLKPAVISQLEGGSELGGSSPLAAGTGLQGLQTDIQTDNDLTKEMYEGKENVSFELQRDFSQETDFSEASLLEKQQEVHSAGNIKKEKSNTIDGTVKDETSPVEECFFSQSSNSYQCHTITGEQPSGCTGLGKSISFDTKLVKHEIINSEERPFKCEELVEPFRCDSQLIQHQENNTEEKPYQCSECGKAFSINEKLIWHQRLHSGEKPFKCVECGKSFSYSSHYITHQTIHSGEKPYQCKMCGKAFSVNGSLSRHQRIHTGEKPYQCKECGNGFSCSSAYITHQRVHTGEKPYECNDCGKAFNVNAKLIQHQRIHTGEKPYECNECGKGFRCSSQLRQHQSIHTGEKPYQCKECGKGFNNNTKLIQHQRIHTGEKPYECTECGKAFSVKGKLIQHQRIHTGEKPYECNECGKAFRCNSQFRQHLRIHTGEKPYECNECGKAFSVNGKLMRHQRIHTGEKPFECNECGRCFTSKRNLLDHHRIHTGEKPYQCKECGKAFSINAKLTRHQRIHTGEKPFKCMECEKAFSCSSNYIVHQRIHTGEKPFQCKECGKAFHVNAHLIRHQRSHTGEKPFRCVECGKGFSFSSDYIIHQTVHTWKKPYMCSVCGKAFRFSFQLSQHQSVHSEGKS.

The KRAB domain occupies 1 to 43 (MLENYGNVASLGFPLLKPAVISQLEGGSELGGSSPLAAGTGLQ). A Glycyl lysine isopeptide (Lys-Gly) (interchain with G-Cter in SUMO2) cross-link involves residue K157. The C2H2-type 1; degenerate zinc-finger motif lies at 168–190 (FKCEELVEPFRCDSQLIQHQENN). 16 C2H2-type zinc fingers span residues 196-218 (YQCS…QRLH), 224-246 (FKCV…QTIH), 252-274 (YQCK…QRIH), 280-302 (YQCK…QRVH), 308-330 (YECN…QRIH), 336-358 (YECN…QSIH), 364-386 (YQCK…QRIH), 392-414 (YECT…QRIH), 420-442 (YECN…LRIH), 448-470 (YECN…QRIH), 476-498 (FECN…HRIH), 504-526 (YQCK…QRIH), 532-554 (FKCM…QRIH), 560-582 (FQCK…QRSH), 588-610 (FRCV…QTVH), and 616-638 (YMCS…QSVH).

It belongs to the krueppel C2H2-type zinc-finger protein family.

It localises to the nucleus. Functionally, may be involved in transcriptional regulation. May have a role in embryonic development. The sequence is that of Zinc finger protein 23 (ZNF23) from Homo sapiens (Human).